The sequence spans 341 residues: tRNA N6-adenosine threonylcarbamoyltransferase (341 aa).

Fe cation is bound by residues His120 and His124. Residues 142-146 (VVSGG), Asp175, Gly188, Asp192, and Asn281 contribute to the substrate site. Asp310 is a Fe cation binding site.

The protein belongs to the KAE1 / TsaD family. The cofactor is Fe(2+).

Its subcellular location is the cytoplasm. It catalyses the reaction L-threonylcarbamoyladenylate + adenosine(37) in tRNA = N(6)-L-threonylcarbamoyladenosine(37) in tRNA + AMP + H(+). Its function is as follows. Required for the formation of a threonylcarbamoyl group on adenosine at position 37 (t(6)A37) in tRNAs that read codons beginning with adenine. Is involved in the transfer of the threonylcarbamoyl moiety of threonylcarbamoyl-AMP (TC-AMP) to the N6 group of A37, together with TsaE and TsaB. TsaD likely plays a direct catalytic role in this reaction. The polypeptide is tRNA N6-adenosine threonylcarbamoyltransferase (Anoxybacillus flavithermus (strain DSM 21510 / WK1)).